A 622-amino-acid chain; its full sequence is Prothrombin (622 aa).

An N-terminal signal peptide occupies residues 1 to 24 (MAHVRGLQLPGCLALAALCSLVHS). A propeptide spanning residues 25-43 (QHVFLAPQQARSLLQRVRR) is cleaved from the precursor. A Gla domain is found at 44-89 (ANTFLEEVRKGNLERECVEETCSYEEAFEALESSTATDVFWAKYTA). Glu-49, Glu-50, Glu-57, Glu-59, Glu-62, Glu-63, Glu-68, Glu-69, Glu-72, and Glu-75 each carry 4-carboxyglutamate. Residues Cys-60 and Cys-65 are joined by a disulfide bond. 11 disulfide bridges follow: Cys-90-Cys-103, Cys-108-Cys-186, Cys-129-Cys-169, Cys-157-Cys-181, Cys-213-Cys-291, Cys-234-Cys-274, Cys-262-Cys-286, Cys-336-Cys-482, Cys-391-Cys-407, Cys-536-Cys-550, and Cys-564-Cys-594. Kringle domains follow at residues 108–186 (CAEG…IPVC) and 213–291 (CVPD…LNYC). 2 N-linked (GlcNAc...) (complex) asparagine glycosylation sites follow: Asn-121 and Asn-143. Positions 364–618 (IVEGSDAEIG…LKKWIQKVID (255 aa)) constitute a Peptidase S1 domain. Residue His-406 is the Charge relay system of the active site. Residue Asn-416 is glycosylated (N-linked (GlcNAc...) (complex) asparagine). Residue Asp-462 is the Charge relay system of the active site. The high affinity receptor-binding region which is also known as the TP508 peptide stretch occupies residues 551–573 (AGYKPDEGKRGDACEGDSGGPFV). Ser-568 (charge relay system) is an active-site residue.

The protein belongs to the peptidase S1 family. In terms of assembly, heterodimer (named alpha-thrombin) of a light and a heavy chain; disulfide-linked. Forms a heterodimer with SERPINA5. In plasma, interacts (via N-terminus) with alpha-1-microglobulin with molar ratio 1:2 and 1:1; this interaction does not prevent the activation of prothrombin to thrombin. Interacts (thrombin) with iripin-8, a serine protease inhibitor from Ixodes ricinus saliva. Interacts (thrombin) with iripin-3, a serine protease inhibitor from Ixodes ricinus saliva. Interacts (thrombin) with Anopheles albimanus salivary thrombin inhibitor anophelin; the interaction results in thrombin inhibition. Interacts (thrombin) with Anopheles gambiae salivary thrombin inhibitor anophelin; the interaction results in thrombin inhibition. Interacts (thrombin) with Amblyomma variegatum variegin; the interaction results in thrombin inhibition. Interacts (thrombin) with Xenopsylla cheopis salivary thrombin inhibitor XC-42. Interacts (thrombin) with Xenopsylla cheopis salivary thrombin inhibitor XC-43. In terms of processing, the gamma-carboxyglutamyl residues, which bind calcium ions, result from the carboxylation of glutamyl residues by a microsomal enzyme, the vitamin K-dependent carboxylase. The modified residues are necessary for the calcium-dependent interaction with a negatively charged phospholipid surface, which is essential for the conversion of prothrombin to thrombin. N-glycosylated. N-glycan heterogeneity at Asn-121: Hex3HexNAc3 (minor), Hex4HexNAc3 (minor) and Hex5HexNAc4 (major). At Asn-143: Hex4HexNAc3 (minor) and Hex5HexNAc4 (major). Post-translationally, in the penultimate step of the coagulation cascade, prothrombin is converted to thrombin by the prothrombinase complex composed of factor Xa (F10), cofactor Va (F5), and phospholipids. This activation requires factor Xa-catalyzed sequential cleavage at 2 sites, Arg-314 and Arg-363, along 2 possible pathways. In the first pathway, the first cleavage occurs at Arg-314, leading to the formation of the inactive intermediate prethrombin-2. This pathway preferentially occurs on platelets and in the absence of cofactor Va. In the second pathway, the first cleavage occurs at Arg-363, which separates protease domain into 2 chains that remain connected through a disulfide bond and generates the active intermediate meizothrombin. The presence of cofactor Va directs activation along the meizothrombin pathway and greatly accelerates the rate of cleavage at Arg-363, but has a smaller effect on the cleavage of meizothrombin at Arg-314. Meizothrombin accumulates as an intermediate when prothrombinase is assembled on the membrane of red blood cells. As to expression, expressed by the liver and secreted in plasma.

The protein localises to the secreted. It localises to the extracellular space. The catalysed reaction is Selective cleavage of Arg-|-Gly bonds in fibrinogen to form fibrin and release fibrinopeptides A and B.. Its activity is regulated as follows. Activity is promoted in the presence of negatively charged surfaces, such as polyphosphate and dextran sulfate. Inhibited by SERPINA5. Thrombin, which cleaves bonds after Arg and Lys, converts fibrinogen to fibrin and activates factors V, VII, VIII, XIII, and, in complex with thrombomodulin, protein C. Functions in blood homeostasis, inflammation and wound healing. Activates coagulation factor XI (F11); activation is promoted by the contact with negatively charged surfaces. Triggers the production of pro-inflammatory cytokines, such as MCP-1/CCL2 and IL8/CXCL8, in endothelial cells. In Homo sapiens (Human), this protein is Prothrombin (F2).